The following is a 779-amino-acid chain: ATP-dependent RNA helicase SUPV3L1, mitochondrial (779 aa).

Residues 1–40 (MSLPRCTLLWARLPAGRGAGPRAAPCSALRALVGSFPGAS) constitute a mitochondrion transit peptide. Lys99 is modified (N6-acetyllysine). Residues 194–334 (EARARQRKII…AINLVSELLY (141 aa)) form the Helicase ATP-binding domain. 207–214 (GPTNSGKT) is a binding site for ATP. The Helicase C-terminal domain occupies 353 to 521 (VLDHALESLD…PTAEQIEMFA (169 aa)). The tract at residues 650-779 (PDSSLVRSLQ…RRKKKDPDSD (130 aa)) is interaction with LAMTOR5, important for protein stability. The segment covering 693-703 (SGDQSRLSGAS) has biased composition (polar residues). Disordered regions lie at residues 693 to 732 (SGDQSRLSGASKSPARRTRGTKSAGNKATEPLSPSDKELP) and 754 to 779 (EWLTQQPEHSREKVGTRRKKKDPDSD). Phosphoserine is present on Ser725. The segment covering 761–779 (EHSREKVGTRRKKKDPDSD) has biased composition (basic and acidic residues).

It belongs to the helicase family. Homodimer; in free form. Component of the mitochondrial degradosome (mtEXO) complex which is a heteropentamer containing 2 copies of SUPV3L1 and 3 copies of PNPT1. As part of mitochondrial degradosome complex, interacts with GRSF1 in a RNA-dependent manner; the interaction enhances the activity of the complex. Interacts with LAMTOR5/HBXIP, WRN and BLM. Requires Mg(2+) as cofactor. It depends on Mn(2+) as a cofactor.

Its subcellular location is the nucleus. The protein resides in the mitochondrion matrix. It localises to the mitochondrion nucleoid. It catalyses the reaction ATP + H2O = ADP + phosphate + H(+). With respect to regulation, helicase activity toward DNA substrate is inhibited by micromolar concentrations of 5,6-dichloro-1-(beta-D-ribofuranosyl)benzotriazole (DRBT) and 4,5,6,7-tetrabromobenzotriazole (TBBT). Helicase activity toward RNA substrate is inhibited by elevated concentrations of TBBT. Inhibited by some ring-expanded nucleoside analogs. In terms of biological role, major helicase player in mitochondrial RNA metabolism. Component of the mitochondrial degradosome (mtEXO) complex, that degrades 3' overhang double-stranded RNA with a 3'-to-5' directionality in an ATP-dependent manner. Involved in the degradation of non-coding mitochondrial transcripts (MT-ncRNA) and tRNA-like molecules. ATPase and ATP-dependent multisubstrate helicase, able to unwind double-stranded (ds) DNA and RNA, and RNA/DNA heteroduplexes in the 5'-to-3' direction. Plays a role in the RNA surveillance system in mitochondria; regulates the stability of mature mRNAs, the removal of aberrantly formed mRNAs and the rapid degradation of non coding processing intermediates. Also implicated in recombination and chromatin maintenance pathways. May protect cells from apoptosis. Associates with mitochondrial DNA. The polypeptide is ATP-dependent RNA helicase SUPV3L1, mitochondrial (Supv3l1) (Mus musculus (Mouse)).